Consider the following 205-residue polypeptide: Ras-related and estrogen-regulated growth inhibitor-like protein (205 aa).

Positions 1–205 (MSNFLHLKYN…NVFGKRRKSV (205 aa)) are small GTPase-like. GTP contacts are provided by residues 11-18 (EKSVSVTK), 58-64 (DPCSQTQ), and 123-126 (NKRD).

The protein belongs to the small GTPase superfamily. Ras family.

It carries out the reaction GTP + H2O = GDP + phosphate + H(+). Binds GDP/GTP and may possess intrinsic GTPase activity. The sequence is that of Ras-related and estrogen-regulated growth inhibitor-like protein (RERGL) from Homo sapiens (Human).